A 538-amino-acid chain; its full sequence is MAVSSKHIPAPDLHRVRRALLSVSDKTGLIDFAKALHANGVEILSTGGTAKSIAAAGIPVKDVSEITGFPEIMDGRVKTLHPAVHGGLLAVRNDPEHVAAMEEHGIGGIDLAVINLYPFEEVRFKGGDYDTTVENIDIGGPAMIRASAKNHAYVATVVDPADYADVVAELEKHSGSLPLAFRKKLAAKAFSRTAAYDAAISNWFAEAIDEETPTYRAAAGKLHSVMRYGENPHQTAGFYLTGEKRPGVATATQLQGKQLSYNNINDTDAAFELVAEFDPARTAAVAIIKHANPCGVAEASTIKEAYLKALACDPVSAFGGIVALNRTLDEEAAEEIVKTFTEVIIAPDATEGAQAIVAAKKNLRLLVTGGLPDPRAKGIAAKTVAGGLLVQSRDNGVVDDLDLKVVTKRAPTEAELNDLKFAFRVGKHVKSNAIVYVKDGATVGIGAGQMSRVDSARIAARKAEDAAEAAGLAAPLTKGCVVASDAFFPFADGLLSAVEAGATAVIQPGGSMRDDEVIAAADEHGIAMVMTGMRHFRH.

The MGS-like domain occupies 6–158 (KHIPAPDLHR…KNHAYVATVV (153 aa)).

The protein belongs to the PurH family.

The catalysed reaction is (6R)-10-formyltetrahydrofolate + 5-amino-1-(5-phospho-beta-D-ribosyl)imidazole-4-carboxamide = 5-formamido-1-(5-phospho-D-ribosyl)imidazole-4-carboxamide + (6S)-5,6,7,8-tetrahydrofolate. It catalyses the reaction IMP + H2O = 5-formamido-1-(5-phospho-D-ribosyl)imidazole-4-carboxamide. The protein operates within purine metabolism; IMP biosynthesis via de novo pathway; 5-formamido-1-(5-phospho-D-ribosyl)imidazole-4-carboxamide from 5-amino-1-(5-phospho-D-ribosyl)imidazole-4-carboxamide (10-formyl THF route): step 1/1. It participates in purine metabolism; IMP biosynthesis via de novo pathway; IMP from 5-formamido-1-(5-phospho-D-ribosyl)imidazole-4-carboxamide: step 1/1. This Brucella abortus (strain S19) protein is Bifunctional purine biosynthesis protein PurH.